A 306-amino-acid chain; its full sequence is Mitochondrial basic amino acids transporter (306 aa).

6 consecutive transmembrane segments (helical) span residues 2 to 22, 61 to 81, 96 to 116, 153 to 172, 187 to 207, and 255 to 275; these read ALDFLAGCAGGVAGVIVGHPF, GLGSPLMGLTFINALVFGVQG, FLAGAAAGAIQCVICCPMELA, GMVSTLLRETPSFGVYFLTY, LLVPKLLLAGGTSGITSWLST, and LLRAFPVNAATFATVTVVLTY. Solcar repeat units lie at residues 2 to 86, 90 to 178, and 190 to 275; these read ALDF…TLRA, DSPL…MTRA, and PKLL…VLTY. A disordered region spans residues 284–306; sequence DSEAALGTSPTPAGSALAQPSSL. Residues 291–306 are compositionally biased toward polar residues; that stretch reads TSPTPAGSALAQPSSL.

This sequence belongs to the mitochondrial carrier (TC 2.A.29) family. In terms of tissue distribution, widely expressed, with highest levels in the brain, including cortex, cerebellum, hippocampus and hypothalamus, and moderate levels in liver, kidney, heart and testis.

Its subcellular location is the mitochondrion inner membrane. It catalyses the reaction L-lysine(out) + L-arginine(in) = L-lysine(in) + L-arginine(out). It carries out the reaction L-histidine(out) + L-arginine(in) = L-histidine(in) + L-arginine(out). The enzyme catalyses L-ornithine(in) + L-arginine(out) = L-ornithine(out) + L-arginine(in). The catalysed reaction is L-homoarginine(in) + L-arginine(out) = L-homoarginine(out) + L-arginine(in). It catalyses the reaction N(omega)-methyl-L-arginine(in) + L-arginine(out) = N(omega)-methyl-L-arginine(out) + L-arginine(in). It carries out the reaction L-arginine(in) = L-arginine(out). The enzyme catalyses L-lysine(in) = L-lysine(out). The catalysed reaction is L-ornithine(in) = L-ornithine(out). It catalyses the reaction L-histidine(out) = L-histidine(in). Mitochondrial transporter of arginine, lysine, homoarginine, methylarginine. Transports with a much lesser extent, ornithine and histidine. Does not transport carnitine nor acylcarnitines. Functions by both counter-exchange and uniport mechanisms. Plays a physiological role in the import of basic amino acids into mitochondria for mitochondrial protein synthesis and amino acid degradation. The protein is Mitochondrial basic amino acids transporter (Slc25a29) of Mus musculus (Mouse).